A 212-amino-acid polypeptide reads, in one-letter code: Urease accessory protein UreG (212 aa).

A GTP-binding site is contributed by 19 to 26; sequence GPVGSGKT.

Belongs to the SIMIBI class G3E GTPase family. UreG subfamily. In terms of assembly, homodimer. UreD, UreF and UreG form a complex that acts as a GTP-hydrolysis-dependent molecular chaperone, activating the urease apoprotein by helping to assemble the nickel containing metallocenter of UreC. The UreE protein probably delivers the nickel.

It is found in the cytoplasm. In terms of biological role, facilitates the functional incorporation of the urease nickel metallocenter. This process requires GTP hydrolysis, probably effectuated by UreG. This is Urease accessory protein UreG from Vibrio parahaemolyticus.